Consider the following 266-residue polypeptide: UPF0354 protein Lm4b_01619 (266 aa).

The protein belongs to the UPF0354 family.

This is UPF0354 protein Lm4b_01619 from Listeria monocytogenes serotype 4b (strain CLIP80459).